The chain runs to 163 residues: MMFAYIVAVVSALALTSAYPTGAPSSTCVSMRPGHLADPQPLPAPYTISTPVNTMKAGDSIEVTISGNTPDDFFRGILLQARQGDNIVGKWTVKDDFSKLLDCGEPDNAVTHANSVDKTTVSYIWTAPEDFVGDVVFLVTIVKVYETFWVAIPSAPVTVLSHK.

A signal peptide spans methionine 1 to alanine 18. Positions tyrosine 19 to lysine 163 constitute a Reelin domain. Cysteine 28 and cysteine 103 are oxidised to a cystine.

It belongs to the insect defense protein family.

The protein resides in the secreted. Functionally, may have antimicrobial activity. In Antheraea mylitta (Tasar silkworm), this protein is Putative defense protein 3.